A 376-amino-acid polypeptide reads, in one-letter code: TATA box-binding protein-like 2 (376 aa).

Residues 103 to 184 (PDEVTQENKD…SDSLSLASIT (82 aa)) are disordered. Residues 108–122 (QENKDQPVISKHETE) are compositionally biased toward basic and acidic residues. The span at 126-159 (ESQSPQSRLPSPSEQDVGLGLNSSSLSNSHSQLH) shows a compositional bias: low complexity. The span at 175-184 (SDSLSLASIT) shows a compositional bias: polar residues.

Belongs to the TBP family. Interacts with TAF3.

Its subcellular location is the cytoplasm. The protein resides in the nucleus. In terms of biological role, transcription factor required in complex with TAF3 for the differentiation of myoblasts into myocytes. The complex replaces TFIID at specific promoters at an early stage in the differentiation process. The sequence is that of TATA box-binding protein-like 2 from Pan troglodytes (Chimpanzee).